A 185-amino-acid polypeptide reads, in one-letter code: Ribosome-recycling factor (185 aa).

A compositionally biased stretch (basic and acidic residues) spans 131–155; sequence DRKNANDKIKKSEKDKEITADESKS. The disordered stretch occupies residues 131–156; sequence DRKNANDKIKKSEKDKEITADESKSA.

The protein belongs to the RRF family.

Its subcellular location is the cytoplasm. Responsible for the release of ribosomes from messenger RNA at the termination of protein biosynthesis. May increase the efficiency of translation by recycling ribosomes from one round of translation to another. The sequence is that of Ribosome-recycling factor from Sulfurimonas denitrificans (strain ATCC 33889 / DSM 1251) (Thiomicrospira denitrificans (strain ATCC 33889 / DSM 1251)).